The chain runs to 344 residues: Alkyl hydroperoxide reductase Rv2159c (344 aa).

The segment at 49-50 (AG) is important for interaction with PknI. Cysteine 84 serves as the catalytic Cysteine sulfenic acid (-SOH) intermediate.

Belongs to the AhpD family. Interacts with the serine/threonine-protein kinase PknI. The PknI-Rv2159c interaction is mediated through phosphorylation independent physical interaction.

Interaction with PknI increases the peroxidase activity by several folds. In terms of biological role, involved in protection against oxidative stresses. May play a significant role in maintaining the cellular homeostasis during stress and virulence of M.tuberculosis. In vitro, catalyzes the decomposition of cumene hydroperoxide (CHP) to acetophenone. The protein is Alkyl hydroperoxide reductase Rv2159c of Mycobacterium tuberculosis (strain ATCC 25618 / H37Rv).